Reading from the N-terminus, the 177-residue chain is ATP synthase subunit delta (177 aa).

This sequence belongs to the ATPase delta chain family. F-type ATPases have 2 components, F(1) - the catalytic core - and F(0) - the membrane proton channel. F(1) has five subunits: alpha(3), beta(3), gamma(1), delta(1), epsilon(1). F(0) has three main subunits: a(1), b(2) and c(10-14). The alpha and beta chains form an alternating ring which encloses part of the gamma chain. F(1) is attached to F(0) by a central stalk formed by the gamma and epsilon chains, while a peripheral stalk is formed by the delta and b chains.

It localises to the cell membrane. In terms of biological role, f(1)F(0) ATP synthase produces ATP from ADP in the presence of a proton or sodium gradient. F-type ATPases consist of two structural domains, F(1) containing the extramembraneous catalytic core and F(0) containing the membrane proton channel, linked together by a central stalk and a peripheral stalk. During catalysis, ATP synthesis in the catalytic domain of F(1) is coupled via a rotary mechanism of the central stalk subunits to proton translocation. Functionally, this protein is part of the stalk that links CF(0) to CF(1). It either transmits conformational changes from CF(0) to CF(1) or is implicated in proton conduction. This is ATP synthase subunit delta from Exiguobacterium sp. (strain ATCC BAA-1283 / AT1b).